Here is a 264-residue protein sequence, read N- to C-terminus: Fructose-1,6-bisphosphatase/inositol-1-monophosphatase (264 aa).

Mg(2+) contacts are provided by Glu70, Asp86, Leu88, and Asp89. Substrate-binding positions include Asp89 to Thr91, Arg185, and Ala190. Asp214 contributes to the Mg(2+) binding site.

It belongs to the inositol monophosphatase superfamily. FBPase class 4 family. It depends on Mg(2+) as a cofactor.

It carries out the reaction beta-D-fructose 1,6-bisphosphate + H2O = beta-D-fructose 6-phosphate + phosphate. It catalyses the reaction a myo-inositol phosphate + H2O = myo-inositol + phosphate. Its function is as follows. Phosphatase with broad specificity; it can dephosphorylate fructose 1,6-bisphosphate, and both D and L isomers of inositol-1-phosphate (I-1-P). This chain is Fructose-1,6-bisphosphatase/inositol-1-monophosphatase (suhB), found in Aquifex aeolicus (strain VF5).